The following is a 120-amino-acid chain: Spermidine export protein MdtJ (120 aa).

4 helical membrane passes run 1 to 21 (MFYW…TLSM), 31 to 51 (AGFI…SFAV), 54 to 74 (IALG…ITIF), and 81 to 101 (EALS…IVLI).

Belongs to the drug/metabolite transporter (DMT) superfamily. Small multidrug resistance (SMR) (TC 2.A.7.1) family. MdtJ subfamily. In terms of assembly, forms a complex with MdtI.

It is found in the cell inner membrane. Its function is as follows. Catalyzes the excretion of spermidine. The sequence is that of Spermidine export protein MdtJ from Salmonella choleraesuis (strain SC-B67).